Reading from the N-terminus, the 354-residue chain is Probable L-ascorbate-6-phosphate lactonase UlaG (354 aa).

Belongs to the UlaG family. The cofactor is a divalent metal cation.

Its subcellular location is the cytoplasm. It carries out the reaction L-ascorbate 6-phosphate + H2O = 3-dehydro-L-gulonate 6-phosphate. It functions in the pathway cofactor degradation; L-ascorbate degradation; D-xylulose 5-phosphate from L-ascorbate: step 1/4. Its function is as follows. Probably catalyzes the hydrolysis of L-ascorbate-6-P into 3-keto-L-gulonate-6-P. Is essential for L-ascorbate utilization under anaerobic conditions. The chain is Probable L-ascorbate-6-phosphate lactonase UlaG from Escherichia coli O127:H6 (strain E2348/69 / EPEC).